The primary structure comprises 434 residues: Homoserine dehydrogenase (434 aa).

Residues Thr13 and Val14 each contribute to the NADPH site. Positions 14, 33, and 43 each coordinate NAD(+). NADP(+) is bound at residue Val14. Arg45 lines the NADPH pocket. NADP(+) contacts are provided by Arg45, Arg46, and Lys103. Lys103 serves as a coordination point for NADPH. 4 residues coordinate Na(+): Glu127, Val130, Gly132, and Ile134. Positions 185 and 188 each coordinate NADP(+). Positions 188 and 199 each coordinate L-homoserine. Catalysis depends on Lys203, which acts as the Proton donor. Gly300 contributes to the NADPH binding site. An NAD(+)-binding site is contributed by Gly300. NADP(+) is bound at residue Gly300. One can recognise an ACT domain in the interval 353-429 (YLRIQAKDHP…GVSGPVVRIR (77 aa)).

The protein belongs to the homoserine dehydrogenase family. It depends on a metal cation as a cofactor.

The catalysed reaction is L-homoserine + NADP(+) = L-aspartate 4-semialdehyde + NADPH + H(+). The enzyme catalyses L-homoserine + NAD(+) = L-aspartate 4-semialdehyde + NADH + H(+). Its pathway is amino-acid biosynthesis; L-methionine biosynthesis via de novo pathway; L-homoserine from L-aspartate: step 3/3. The protein operates within amino-acid biosynthesis; L-threonine biosynthesis; L-threonine from L-aspartate: step 3/5. With respect to regulation, feedback inhibition by threonine. Functionally, catalyzes the conversion of L-aspartate-beta-semialdehyde (L-Asa) to L-homoserine (L-Hse), the third step in the biosynthesis of threonine and methionine from aspartate. This chain is Homoserine dehydrogenase (hom), found in Pseudomonas aeruginosa (strain ATCC 15692 / DSM 22644 / CIP 104116 / JCM 14847 / LMG 12228 / 1C / PRS 101 / PAO1).